The following is a 946-amino-acid chain: Protein translocase subunit SecA (946 aa).

ATP contacts are provided by residues Gln90, 108–112, and Asp509; that span reads GEGKT.

Belongs to the SecA family. As to quaternary structure, monomer and homodimer. Part of the essential Sec protein translocation apparatus which comprises SecA, SecYEG and auxiliary proteins SecDF. Other proteins may also be involved.

Its subcellular location is the cell inner membrane. It is found in the cellular thylakoid membrane. It localises to the cytoplasm. It carries out the reaction ATP + H2O + cellular proteinSide 1 = ADP + phosphate + cellular proteinSide 2.. In terms of biological role, part of the Sec protein translocase complex. Interacts with the SecYEG preprotein conducting channel. Has a central role in coupling the hydrolysis of ATP to the transfer of proteins into and across the cell membrane, serving as an ATP-driven molecular motor driving the stepwise translocation of polypeptide chains across the membrane. Its function is as follows. Probably participates in protein translocation into and across both the cytoplasmic and thylakoid membranes in cyanobacterial cells. In Synechococcus sp. (strain RCC307), this protein is Protein translocase subunit SecA.